A 595-amino-acid chain; its full sequence is GPI mannosyltransferase 3 (595 aa).

10 consecutive transmembrane segments (helical) span residues 58–78, 85–105, 128–148, 185–207, 212–232, 235–255, 260–280, 289–309, 319–339, and 413–433; these read YAFPMLFEMSYYVAWILGVAT, LAHATALCGAVVPSGAAGVAA, GPRVVMAAVAACGEFYSVLLV, FFATRTFINSFEMTLTAVALYHW, GLDVGSLGFSASLAVAAFACL, PTNVLIWAVLGLFLVLNLVRS, LLLTLVAKVAAAGALAVCANI, GVLLPLLRFIEFNVTTPLAAF, LLQSVPLIVGYALPFFVGALL, and VQSLLYVLPVLSITAALVLNT.

This sequence belongs to the glycosyltransferase 22 family. PIGB subfamily.

It is found in the endoplasmic reticulum membrane. The protein operates within glycolipid biosynthesis; glycosylphosphatidylinositol-anchor biosynthesis. Its function is as follows. Mannosyltransferase involved in glycosylphosphatidylinositol-anchor biosynthesis. Transfers the third mannose to Man2-GlcN-acyl-PI during GPI precursor assembly. The protein is GPI mannosyltransferase 3 (GPI10) of Eremothecium gossypii (strain ATCC 10895 / CBS 109.51 / FGSC 9923 / NRRL Y-1056) (Yeast).